The chain runs to 79 residues: Major outer membrane lipoprotein Lpp 2 (79 aa).

An N-terminal signal peptide occupies residues 1 to 21; sequence MNRTNKLILGAVVLGSTLLAG. The N-palmitoyl cysteine moiety is linked to residue cysteine 22. Cysteine 22 carries S-diacylglycerol cysteine lipidation. 2 consecutive repeats follow at residues 25-35 and 39-49; these read NAKIDQLSSDV and SAKVDQLSNDV. Residues 28–69 adopt a coiled-coil conformation; it reads IDQLSSDVQTLSAKVDQLSNDVNAMRSDVQAAKDDAARANQR. Lysine 79 carries the post-translational modification N6-murein peptidoglycan lysine.

It belongs to the Lpp family. In terms of assembly, homotrimer.

The protein localises to the cell outer membrane. It localises to the secreted. It is found in the cell wall. A highly abundant outer membrane lipoprotein that controls the distance between the inner and outer membranes. The only protein known to be covalently linked to the peptidoglycan network (PGN). Also non-covalently binds the PGN. The link between the cell outer membrane and PGN contributes to maintenance of the structural and functional integrity of the cell envelope, and maintains the correct distance between the PGN and the outer membrane. In Salmonella typhi, this protein is Major outer membrane lipoprotein Lpp 2.